The chain runs to 122 residues: Large ribosomal subunit protein uL14 (122 aa).

Belongs to the universal ribosomal protein uL14 family. Part of the 50S ribosomal subunit. Forms a cluster with proteins L3 and L19. In the 70S ribosome, L14 and L19 interact and together make contacts with the 16S rRNA in bridges B5 and B8.

Functionally, binds to 23S rRNA. Forms part of two intersubunit bridges in the 70S ribosome. The polypeptide is Large ribosomal subunit protein uL14 (Pseudomonas paraeruginosa (strain DSM 24068 / PA7) (Pseudomonas aeruginosa (strain PA7))).